The sequence spans 173 residues: Monothiol glutaredoxin-S14, chloroplastic (173 aa).

A chloroplast-targeting transit peptide spans M1–S63. The 102-residue stretch at K72–S173 folds into the Glutaredoxin domain. K89 serves as a coordination point for glutathione. [2Fe-2S] cluster is bound by residues C97 and F99. Position 97 is an S-glutathionyl cysteine (C97). The interval C97–S100 is required for CAX1 activation. R126 and K130 together coordinate glutathione. Residues S133 to T137 are required for CAX1 activation. Glutathione contacts are provided by residues F138 and C151–D152.

Belongs to the glutaredoxin family. CGFS subfamily. In terms of assembly, [2Fe-2S]-bridged holo-homodimer. Interacts with N-terminal part of CAX1 in yeast. Interacts in vitro with SUFE1, BOLA1, BOLA2 and BOLA4. Interacts in vivo only with SUFE1, BOLA1 and BOLA4. Interacts with SBP1. In terms of tissue distribution, highly expressed in leaves, at intermediate levels in stems and at lower levels in roots and flowers.

The protein resides in the plastid. Its subcellular location is the chloroplast. In terms of biological role, may only reduce GSH-thiol disulfides, but not protein disulfides (Potential). Probably involved in the regulation of the redox state of the BOLA proteins (Potential). May act as Fe-S cluster donors to Fe-S cluster-requiring proteins. May protect cells against protein oxidative damage. May regulate CAX cation transporters. The GRXS14-BOLA1 heterodimer binds a labile, oxygen sensitive Fe-S cluster. The polypeptide is Monothiol glutaredoxin-S14, chloroplastic (Arabidopsis thaliana (Mouse-ear cress)).